The primary structure comprises 189 residues: UPF0301 protein PFLU_5755 (189 aa).

The protein belongs to the UPF0301 (AlgH) family.

The polypeptide is UPF0301 protein PFLU_5755 (Pseudomonas fluorescens (strain SBW25)).